The primary structure comprises 777 residues: Dynamin-like protein ARC5 (777 aa).

The Dynamin-type G domain maps to 45 to 343 (PFEAPAVLVV…LWKRYKESVP (299 aa)). The segment at 55–62 (GQQTDGKS) is G1 motif. 55-62 (GQQTDGKS) is a binding site for GTP. Residues 81–83 (KTR) are G2 motif. A G3 motif region spans residues 160 to 163 (DTPG). GTP contacts are provided by residues 160 to 164 (DTPGL) and 231 to 234 (TKLD). Positions 231–234 (TKLD) are G4 motif. Residues 265–268 (SPFF) are G5 motif. Coiled-coil stretches lie at residues 300–320 (EDIA…EKSR) and 728–765 (NLRQ…NSHE).

It belongs to the TRAFAC class dynamin-like GTPase superfamily. Dynamin/Fzo/YdjA family. Forms a homodimer and heterodimers with DRP3A and DRP3B on peroxisomes. Also interacts with FIS1A (but not FIS1B) and PEX11 proteins (PEX11A, PEX11B, PEX11C, PEX11D and PEX11E) on peroxisomes. Interacts with PDV1 and PDV2. Post-translationally, stabilized at the plastid outer envelope membranes (OEMs) in the constriction site when in complex with GTP, but destabilized after conversion of GTP into GDP leading to turnover with a cytosolic pool.

It is found in the cytoplasm. The protein resides in the plastid. It localises to the chloroplast outer membrane. The protein localises to the peroxisome. Its subcellular location is the cytosol. The enzyme catalyses GTP + H2O = GDP + phosphate + H(+). Its activity is regulated as follows. GTPase activity is repressed by PDV2 thus increasing stability at the plastid outer envelope membranes (OEMs) periphery. Functionally, mechanochemical GTPase component of both plastid and peroxisome division machinery. Required for the last steps of plastid division specifically in mesophyll-cell, when the narrow isthmus breaks, facilitating the separation of the daughter plastids. Necessary for peroxisome activities. Seems to influence stromule (stroma-filled tubular extensions of the plastid envelope membrane) length and frequency. The polypeptide is Dynamin-like protein ARC5 (Arabidopsis thaliana (Mouse-ear cress)).